Consider the following 3535-residue polypeptide: Lysosomal-trafficking regulator (3535 aa).

Residues 412–436 form a disordered region; it reads MESSASTAMPKQQQHPRHKRQRSSQ. The WD 1 repeat unit spans residues 689 to 736; sequence TLSRRLIQLQLNSSDRASQLFQALLYKCSKHSRAKFWLDESSTPAKLE. A compositionally biased stretch (polar residues) spans 1066–1096; sequence STHQEPTGVVNSPSGDSQQPRPRARSFNSGS. Disordered regions lie at residues 1066–1132 and 1592–1613; these read STHQ…NAGV and GEGQ…TLDG. Residues 1596–1610 show a composition bias toward low complexity; that stretch reads PTGRSPGSSSSSRST. The region spanning 2686-2784 is the BEACH-type PH domain; it reads SLNSQILYNF…MREVFCDKIV (99 aa). A BEACH domain is found at 2784-3081; the sequence is VATPDQSKVI…QLFKSPHPAS (298 aa). The segment at 3254–3287 is disordered; sequence GIGGGGSERVDEAGNLHPTSSASSVNSSSISSGG. A compositionally biased stretch (low complexity) spans 3273–3285; the sequence is SSASSVNSSSISS. 3 WD repeats span residues 3307–3346, 3442–3486, and 3489–3527; these read RHTD…YVRT, VHED…FVSE, and TGTS…GNAP.

Interacts with Rab5; the interaction is independent of GDP or GTP. Interacts with msps.

It localises to the vesicle. It is found in the cytoplasm. Its subcellular location is the cytoskeleton. The protein localises to the spindle. The protein resides in the spindle pole. Its function is as follows. Adapter protein that regulates intracellular membrane fusion reactions. Regulates the fusion of lysosome-related organelles. Promotes microtubules nucleation and centrosomal recruitment of microtubule nucleating proteins such as msps. In syncytial embryos, during the formation of yolk granules, suppresses vesicle fusion events with lipid droplets, possibly via interaction with Rab5. In the eye, regulates pigment granules size. In hemocytes, required for the late steps of bacteria phagocytosis. In fat body, required for autophagosome maturation. In Drosophila melanogaster (Fruit fly), this protein is Lysosomal-trafficking regulator.